Reading from the N-terminus, the 392-residue chain is Bone morphogenetic protein 15 (392 aa).

A signal peptide spans 1-25 (MALLTILRILLWGVVLFMEQRVQMA). Residues 26-267 (KPGWPSTALL…ESSFLMRSVR (242 aa)) constitute a propeptide that is removed on maturation. N85, N213, N236, N349, and N373 each carry an N-linked (GlcNAc...) asparagine glycan. Cystine bridges form between C291–C357, C320–C389, and C324–C391.

The protein belongs to the TGF-beta family. As to quaternary structure, homodimer. But, in contrast to other members of this family, cannot be disulfide-linked. Ovary specific.

It is found in the secreted. May be involved in follicular development. Oocyte-specific growth/differentiation factor that stimulates folliculogenesis and granulosa cell (GC) growth. This chain is Bone morphogenetic protein 15 (Bmp15), found in Mus musculus (Mouse).